Consider the following 156-residue polypeptide: Small ribosomal subunit protein uS7 (156 aa).

It belongs to the universal ribosomal protein uS7 family. As to quaternary structure, part of the 30S ribosomal subunit. Contacts proteins S9 and S11.

Its function is as follows. One of the primary rRNA binding proteins, it binds directly to 16S rRNA where it nucleates assembly of the head domain of the 30S subunit. Is located at the subunit interface close to the decoding center, probably blocks exit of the E-site tRNA. In Rhodococcus opacus (strain B4), this protein is Small ribosomal subunit protein uS7.